Here is a 460-residue protein sequence, read N- to C-terminus: Transcription factor TGA10 (460 aa).

The segment covering 1–11 (MQGHHQNHHQH) has biased composition (basic residues). Disordered regions lie at residues 1–29 (MQGH…NKDG) and 43–163 (LDGQ…PKTL). Residues 12–21 (LSSSSATSSH) show a composition bias toward low complexity. Composition is skewed to polar residues over residues 65–81 (TQNL…NIFP) and 121–136 (DLTN…QGSK). Positions 138–162 (IKKEGNRKGLASSDHDIPKSSDPKT) are enriched in basic and acidic residues. The bZIP domain maps to 159 to 203 (DPKTLRRLAQNREAARKSRLRKKAYVQQLESCRIKLTQLEQEIQR). The tract at residues 161–181 (KTLRRLAQNREAARKSRLRKK) is basic motif. The Nuclear localization signal signature appears at 163–170 (LRRLAQNR). The segment at 187–201 (LESCRIKLTQLEQEI) is leucine-zipper. In terms of domain architecture, DOG1 spans 236–455 (AAVFDMEYAR…QALSSLWLAR (220 aa)).

Belongs to the bZIP family. In terms of assembly, homodimer. Binds DNA as a dimer. Interacts with floral glutaredoxins GRXC7/ROXY1 and GRXC8/ROXY2 in the nucleus. Interacts with TGA1, TGA2, TGA3, TGA4, TGA5, TGA6, TGA7, TGA9 and PAN. In terms of tissue distribution, expressed at low levels in inflorescence apex and flowers.

The protein localises to the nucleus. In terms of biological role, together with TGA9, basic leucine-zipper transcription factor required for anther development, probably via the activation of SPL expression in anthers and via the regulation of genes with functions in early and middle tapetal development. Required for signaling responses to pathogen-associated molecular patterns (PAMPs) such as flg22 that involves chloroplastic reactive oxygen species (ROS) production and subsequent expression of H(2)O(2)-responsive genes. The chain is Transcription factor TGA10 from Arabidopsis thaliana (Mouse-ear cress).